We begin with the raw amino-acid sequence, 369 residues long: Chorismate synthase (369 aa).

Positions 48 and 54 each coordinate NADP(+). Residues 125 to 127 (RSS), 238 to 239 (NA), Gly-278, 293 to 297 (KPTSS), and Arg-319 each bind FMN.

This sequence belongs to the chorismate synthase family. In terms of assembly, homotetramer. FMNH2 serves as cofactor.

It catalyses the reaction 5-O-(1-carboxyvinyl)-3-phosphoshikimate = chorismate + phosphate. It functions in the pathway metabolic intermediate biosynthesis; chorismate biosynthesis; chorismate from D-erythrose 4-phosphate and phosphoenolpyruvate: step 7/7. Functionally, catalyzes the anti-1,4-elimination of the C-3 phosphate and the C-6 proR hydrogen from 5-enolpyruvylshikimate-3-phosphate (EPSP) to yield chorismate, which is the branch point compound that serves as the starting substrate for the three terminal pathways of aromatic amino acid biosynthesis. This reaction introduces a second double bond into the aromatic ring system. This chain is Chorismate synthase, found in Cupriavidus metallidurans (strain ATCC 43123 / DSM 2839 / NBRC 102507 / CH34) (Ralstonia metallidurans).